Consider the following 396-residue polypeptide: uncharacterized protein (396 aa).

12 consecutive transmembrane segments (helical) span residues 8–28, 44–64, 73–93, 97–117, 133–153, 158–178, 213–233, 250–270, 276–296, 304–324, 338–358, and 363–383; these read TASGMYINYFFLGMVNIILAS, ISYVIAAIGFGKLLTYGISGV, PLVVASAGIMAVFLVGIPLSP, LAFVFALLAGVANSAMDAGTY, VLVKAFMSVGAALLPLLITFL, MFYGFAFYLPAAVYLLNIIYL, ALIIIGFTSTALFTVSQIWLP, LLSYYSIGSLASVLLLAVLLN, VFITLLYPIITLCTLAVMLTV, ITAFFLGFSTAGVFQITITLM, IVATASSLASILLPIATGLIA, and IAHIFIFDFGIAVIGTAAAAF.

It belongs to the major facilitator superfamily.

It is found in the cell membrane. This is an uncharacterized protein from Bacillus subtilis (strain 168).